We begin with the raw amino-acid sequence, 446 residues long: Casein kinase I homolog 1 (446 aa).

Positions 12–274 (YKVGRRIGEG…FDATPDYDYL (263 aa)) constitute a Protein kinase domain. Residues 18–26 (IGEGSFGVI) and K41 contribute to the ATP site. D131 functions as the Proton acceptor in the catalytic mechanism. The interval 308 to 430 (KSRNAETENQ…ETEAPKKKKS (123 aa)) is disordered. S329 carries the post-translational modification Phosphoserine. Residues 332-345 (PALQNHASTQNVVS) show a composition bias toward polar residues. Basic and acidic residues predominate over residues 346–355 (KRSDYEKPFA). Polar residues predominate over residues 360-397 (NSASDSAEPNQNSLPNPPTETKATTTVPDRSGLATNQP). Positions 401 to 412 (DVHDSSEERVTR) are enriched in basic and acidic residues.

Belongs to the protein kinase superfamily. CK1 Ser/Thr protein kinase family. Casein kinase I subfamily.

The protein localises to the cytoplasm. It catalyses the reaction L-seryl-[protein] + ATP = O-phospho-L-seryl-[protein] + ADP + H(+). It carries out the reaction L-threonyl-[protein] + ATP = O-phospho-L-threonyl-[protein] + ADP + H(+). Casein kinases are operationally defined by their preferential utilization of acidic proteins such as caseins as substrates. The sequence is that of Casein kinase I homolog 1 (cki1) from Schizosaccharomyces pombe (strain 972 / ATCC 24843) (Fission yeast).